Here is a 538-residue protein sequence, read N- to C-terminus: Pentatricopeptide repeat-containing protein At1g33350 (538 aa).

10 PPR repeats span residues Asn-87–Arg-123, Asn-125–Leu-159, Tyr-160–Arg-191, Asn-192–Ser-226, Trp-227–Glu-253, Asn-259–Ser-293, Asp-294–Lys-324, Ser-325–Asp-359, Asp-363–Pro-398, and Arg-399–Ala-433. The type E motif stretch occupies residues Ile-434–Asp-509.

It belongs to the PPR family. PCMP-E subfamily.

In Arabidopsis thaliana (Mouse-ear cress), this protein is Pentatricopeptide repeat-containing protein At1g33350 (PCMP-E57).